Reading from the N-terminus, the 941-residue chain is Cell wall protein IFF3 (941 aa).

An N-terminal signal peptide occupies residues 1–20; the sequence is MQLFQNILVSIALLTQVVFA. Residues N36, N367, N686, N732, N790, N818, N825, N884, and N917 are each glycosylated (N-linked (GlcNAc...) asparagine). Residue N917 is the site of GPI-anchor amidated asparagine attachment. The propeptide at 918–941 is removed in mature form; the sequence is GSNKESIENIKYLTLVVFGLMMFM.

The protein belongs to the HYR1/IFF family. In terms of processing, the GPI-anchor is attached to the protein in the endoplasmic reticulum and serves to target the protein to the cell surface. There, the glucosamine-inositol phospholipid moiety is cleaved off and the GPI-modified mannoprotein is covalently attached via its lipidless GPI glycan remnant to the 1,6-beta-glucan of the outer cell wall layer.

Its subcellular location is the secreted. The protein resides in the cell wall. It is found in the membrane. In terms of biological role, GPI-anchored cell wall protein involved in cell wall organization, hyphal growth, as well as in host-fungal interaction and virulence. This is Cell wall protein IFF3 (IFF3) from Candida albicans (strain SC5314 / ATCC MYA-2876) (Yeast).